We begin with the raw amino-acid sequence, 543 residues long: Chaperonin GroEL (543 aa).

Residues 29–32 (TLGP), 86–90 (DGTTT), Gly-413, 478–480 (NAA), and Asp-494 contribute to the ATP site.

Belongs to the chaperonin (HSP60) family. In terms of assembly, forms a cylinder of 14 subunits composed of two heptameric rings stacked back-to-back. Interacts with the co-chaperonin GroES.

The protein localises to the cytoplasm. It catalyses the reaction ATP + H2O + a folded polypeptide = ADP + phosphate + an unfolded polypeptide.. In terms of biological role, together with its co-chaperonin GroES, plays an essential role in assisting protein folding. The GroEL-GroES system forms a nano-cage that allows encapsulation of the non-native substrate proteins and provides a physical environment optimized to promote and accelerate protein folding. This Lactobacillus johnsonii (strain CNCM I-12250 / La1 / NCC 533) protein is Chaperonin GroEL.